Consider the following 716-residue polypeptide: ATP-dependent DNA helicase DinG (716 aa).

The Helicase ATP-binding domain maps to 17–294; sequence ALQEQIPDFI…TCMEQFRPKT (278 aa). 54–61 lines the ATP pocket; it reads APTGVGKT. C120 serves as a coordination point for [4Fe-4S] cluster. The short motif at 131 to 134 is the DEAH box element; sequence EPTQ. Residues C194, C199, and C205 each coordinate [4Fe-4S] cluster. Residues 248–251 carry the DEAH box motif; the sequence is DEGH. Residues 517-698 form the Helicase C-terminal domain; sequence HIAEMAAFFR…VFPIEQPEVP (182 aa).

Belongs to the helicase family. DinG subfamily. Type 1 sub-subfamily. The cofactor is [4Fe-4S] cluster.

The catalysed reaction is Couples ATP hydrolysis with the unwinding of duplex DNA at the replication fork by translocating in the 5'-3' direction. This creates two antiparallel DNA single strands (ssDNA). The leading ssDNA polymer is the template for DNA polymerase III holoenzyme which synthesizes a continuous strand.. It catalyses the reaction ATP + H2O = ADP + phosphate + H(+). Its function is as follows. DNA-dependent ATPase and 5'-3' DNA helicase. Unwinds D-loops, R-loops, forked DNA and G-quadruplex DNA. In Escherichia coli O157:H7, this protein is ATP-dependent DNA helicase DinG.